Here is a 592-residue protein sequence, read N- to C-terminus: Proline--tRNA ligase (592 aa).

The protein belongs to the class-II aminoacyl-tRNA synthetase family. ProS type 1 subfamily. Homodimer.

It is found in the cytoplasm. The enzyme catalyses tRNA(Pro) + L-proline + ATP = L-prolyl-tRNA(Pro) + AMP + diphosphate. In terms of biological role, catalyzes the attachment of proline to tRNA(Pro) in a two-step reaction: proline is first activated by ATP to form Pro-AMP and then transferred to the acceptor end of tRNA(Pro). As ProRS can inadvertently accommodate and process non-cognate amino acids such as alanine and cysteine, to avoid such errors it has two additional distinct editing activities against alanine. One activity is designated as 'pretransfer' editing and involves the tRNA(Pro)-independent hydrolysis of activated Ala-AMP. The other activity is designated 'posttransfer' editing and involves deacylation of mischarged Ala-tRNA(Pro). The misacylated Cys-tRNA(Pro) is not edited by ProRS. The chain is Proline--tRNA ligase from Corynebacterium urealyticum (strain ATCC 43042 / DSM 7109).